Reading from the N-terminus, the 185-residue chain is ATP synthase subunit b 2 (185 aa).

The interval 1–26 (MAQGHGDAKGTTAHTEAGGGHKAPFP) is disordered. The chain crosses the membrane as a helical span at residues 37-57 (LVSLAIAFVALYLIVSKIALP).

It belongs to the ATPase B chain family. F-type ATPases have 2 components, F(1) - the catalytic core - and F(0) - the membrane proton channel. F(1) has five subunits: alpha(3), beta(3), gamma(1), delta(1), epsilon(1). F(0) has three main subunits: a(1), b(2) and c(10-14). The alpha and beta chains form an alternating ring which encloses part of the gamma chain. F(1) is attached to F(0) by a central stalk formed by the gamma and epsilon chains, while a peripheral stalk is formed by the delta and b chains.

It is found in the cell inner membrane. In terms of biological role, f(1)F(0) ATP synthase produces ATP from ADP in the presence of a proton or sodium gradient. F-type ATPases consist of two structural domains, F(1) containing the extramembraneous catalytic core and F(0) containing the membrane proton channel, linked together by a central stalk and a peripheral stalk. During catalysis, ATP synthesis in the catalytic domain of F(1) is coupled via a rotary mechanism of the central stalk subunits to proton translocation. Component of the F(0) channel, it forms part of the peripheral stalk, linking F(1) to F(0). The b'-subunit is a diverged and duplicated form of b found in plants and photosynthetic bacteria. This is ATP synthase subunit b 2 (atpF2) from Rhodopseudomonas palustris (strain ATCC BAA-98 / CGA009).